The primary structure comprises 421 residues: MIMQDIRLRLEPQHSKATFISSSSASSSSSQTAETTLIETAEKSPASEAAAGTVTTTSPQHFFHHHHPPAHPHPPRQQPHPHSHSHPHPHPQLQRRPVEQLHLLHSHHDVQELSGQEHPHPQPGSHPHPHHLRSPSSEEDNSPTEMNNCRRLVDKPPLVKRLTMGIGLLRGTEDSRPLMHSTCGSSLTSGSGCGSTQTISDGYVNEAICEPDKYVASKFGDSCRQSLSALESATQRLQVELPAASKKYLRETCSANSSPKLFPGHSALRLDNLSLAEQQELKGAAWFQAGIPREISLEALSRQSPGAFLVRQSSTKPGCFALSLRVPPPSPRVAHYLILRTQRGYKIKGFTKEFSSLKALITHHSVMPELLPVPLTLPRPPSTRSQRSQGAYAGGTGNGGADFEMYGSLNDFRKMMADLNV.

4 disordered regions span residues 18-94 (TFIS…PQLQ), 109-154 (DVQE…RLVD), 173-194 (EDSRPLMHSTCGSSLTSGSGCG), and 372-396 (PVPLTLPRPPSTRSQRSQGAYAGGT). A compositionally biased stretch (low complexity) spans 21–30 (SSSSASSSSS). The span at 62–89 (FFHHHHPPAHPHPPRQQPHPHSHSHPHP) shows a compositional bias: basic residues. Positions 109–120 (DVQELSGQEHPH) are enriched in basic and acidic residues. Positions 181 to 194 (STCGSSLTSGSGCG) are enriched in low complexity. An SH2 domain is found at 286–379 (WFQAGIPREI…LLPVPLTLPR (94 aa)).

In terms of assembly, may interact (via SH2 domain) with Egfr (when phosphorylated). In terms of tissue distribution, detected along the wing margin, with high levels of expression in two stripes of cells on either side of the dorsal/ventral boundary and lower levels of expression in a small region at the anteroposterior boundary (at protein level). High levels of expression along two parallel stripes of cells on either side of the wing pouch dorsal/ventral boundary, and slightly lower levels of expression in a region either side of the anteroposterior boundary. Also expressed in discrete regions of the wing imaginal disk outside of the pouch. Expressed in eye imaginal disk photoreceptors with highest levels of expression in R7 photoreceptor cells.

In terms of biological role, involved in the negative regulation of the Egfr/Ras signaling pathway. During wing morphogenesis, may function redundantly with PVRAP to inhibit Egfr activity and prevent uncontrolled cell growth. This is EGFR adapter protein from Drosophila melanogaster (Fruit fly).